We begin with the raw amino-acid sequence, 243 residues long: Pleckstrin homology domain-containing family B member 1 (243 aa).

One can recognise a PH domain in the interval 21-128; that stretch reads ALVRGGWLWR…WKTALMEANS (108 aa).

As to quaternary structure, binds transducins. Homodimer. Interacts (via PH domain) with MYO1C. Interacts (via PH domain) with MYO7A. As to expression, highly expressed in retina and brain. In retina, abundantly expressed in photoreceptors. Isoform 4 is the predominant isoform expressed in mature olfactory receptor neurons and vestibular and cochlear hair cells. Also expressed in cells with possible sensory function, including peripheral retinal ganglion cells, cochlear interdental cells, and neurons of the circumventricular organ (at protein level).

It is found in the membrane. Its subcellular location is the cytoplasm. The chain is Pleckstrin homology domain-containing family B member 1 (Plekhb1) from Mus musculus (Mouse).